A 197-amino-acid chain; its full sequence is ADP-ribosylation factor 1 (197 aa).

G2 carries the N-myristoyl glycine lipid modification. Residues 24–31 (GLDAAGKT), 67–71 (DVGGQ), and 126–129 (NKQD) each bind GTP.

Belongs to the small GTPase superfamily. Arf family.

The protein resides in the golgi apparatus. It catalyses the reaction GTP + H2O = GDP + phosphate + H(+). GTP-binding protein involved in protein trafficking; may modulate vesicle budding and uncoating within the Golgi apparatus. In Solanum tuberosum (Potato), this protein is ADP-ribosylation factor 1.